The following is a 142-amino-acid chain: Large ribosomal subunit protein uL13 (142 aa).

It belongs to the universal ribosomal protein uL13 family. As to quaternary structure, part of the 50S ribosomal subunit.

Its function is as follows. This protein is one of the early assembly proteins of the 50S ribosomal subunit, although it is not seen to bind rRNA by itself. It is important during the early stages of 50S assembly. This chain is Large ribosomal subunit protein uL13, found in Pseudomonas entomophila (strain L48).